Consider the following 96-residue polypeptide: Co-chaperonin GroES (96 aa).

The protein belongs to the GroES chaperonin family. Heptamer of 7 subunits arranged in a ring. Interacts with the chaperonin GroEL.

Its subcellular location is the cytoplasm. Functionally, together with the chaperonin GroEL, plays an essential role in assisting protein folding. The GroEL-GroES system forms a nano-cage that allows encapsulation of the non-native substrate proteins and provides a physical environment optimized to promote and accelerate protein folding. GroES binds to the apical surface of the GroEL ring, thereby capping the opening of the GroEL channel. The protein is Co-chaperonin GroES of Paraburkholderia phymatum (strain DSM 17167 / CIP 108236 / LMG 21445 / STM815) (Burkholderia phymatum).